A 513-amino-acid polypeptide reads, in one-letter code: Histidine ammonia-lyase (513 aa).

Positions 146-148 (ASG) form a cross-link, 5-imidazolinone (Ala-Gly). At S147 the chain carries 2,3-didehydroalanine (Ser).

This sequence belongs to the PAL/histidase family. Post-translationally, contains an active site 4-methylidene-imidazol-5-one (MIO), which is formed autocatalytically by cyclization and dehydration of residues Ala-Ser-Gly.

The protein localises to the cytoplasm. The enzyme catalyses L-histidine = trans-urocanate + NH4(+). The protein operates within amino-acid degradation; L-histidine degradation into L-glutamate; N-formimidoyl-L-glutamate from L-histidine: step 1/3. The protein is Histidine ammonia-lyase of Caulobacter vibrioides (strain NA1000 / CB15N) (Caulobacter crescentus).